A 235-amino-acid polypeptide reads, in one-letter code: RNA polymerase sigma factor SigI7 (235 aa).

A Polymerase core binding motif is present at residues 49–62 (DELSIALMAFVETI). Positions 191–210 (VAEIEQSLKIPRKTIERARK) form a DNA-binding region, H-T-H motif.

Belongs to the sigma-70 factor family. SigI subfamily. Interacts with RsgI7.

The protein localises to the cytoplasm. Its activity is regulated as follows. Negatively regulated by the anti-sigma-I factor RsgI7. Its function is as follows. Sigma factors are initiation factors that promote the attachment of RNA polymerase to specific initiation sites and are then released. In Acetivibrio thermocellus (strain ATCC 27405 / DSM 1237 / JCM 9322 / NBRC 103400 / NCIMB 10682 / NRRL B-4536 / VPI 7372) (Clostridium thermocellum), this protein is RNA polymerase sigma factor SigI7.